The following is a 379-amino-acid chain: Alternative oxidase 1, mitochondrial (379 aa).

Low complexity predominate over residues 33–50 (TTTTSTKSRSSTSTAATT). Residues 33–76 (TTTTSTKSRSSTSTAATTVGNSNPKSPIDEDNLEKPGTIPTKHK) form a disordered region. Fe cation is bound by residues Glu-180, Glu-219, and His-222. A helical transmembrane segment spans residues 234 to 256 (WFTRSIIYIGQGVFTNIFFLVYL). Fe cation-binding residues include Glu-270, Glu-271, Glu-326, and His-329.

Belongs to the alternative oxidase family. The cofactor is Fe cation.

The protein resides in the mitochondrion inner membrane. Catalyzes cyanide-resistant oxygen consumption. May increase respiration when the cytochrome respiratory pathway is restricted, or in response to low temperatures. This Candida albicans (Yeast) protein is Alternative oxidase 1, mitochondrial (AOX1).